Here is a 633-residue protein sequence, read N- to C-terminus: 1-deoxy-D-xylulose-5-phosphate synthase (633 aa).

The tract at residues 1–22 (MPTTFHEIPRKRPTTPLLDRAQ) is disordered. Residues His87 and 128 to 130 (GHS) each bind thiamine diphosphate. Mg(2+) is bound at residue Asp159. Thiamine diphosphate contacts are provided by residues 160–161 (GA), Asn188, Phe295, and Glu378. Asn188 contacts Mg(2+).

It belongs to the transketolase family. DXPS subfamily. In terms of assembly, homodimer. The cofactor is Mg(2+). Thiamine diphosphate serves as cofactor.

It catalyses the reaction D-glyceraldehyde 3-phosphate + pyruvate + H(+) = 1-deoxy-D-xylulose 5-phosphate + CO2. The protein operates within metabolic intermediate biosynthesis; 1-deoxy-D-xylulose 5-phosphate biosynthesis; 1-deoxy-D-xylulose 5-phosphate from D-glyceraldehyde 3-phosphate and pyruvate: step 1/1. Functionally, catalyzes the acyloin condensation reaction between C atoms 2 and 3 of pyruvate and glyceraldehyde 3-phosphate to yield 1-deoxy-D-xylulose-5-phosphate (DXP). The protein is 1-deoxy-D-xylulose-5-phosphate synthase of Pseudomonas fluorescens (strain ATCC BAA-477 / NRRL B-23932 / Pf-5).